The sequence spans 179 residues: Large ribosomal subunit protein uL6c (179 aa).

The protein belongs to the universal ribosomal protein uL6 family. In terms of assembly, part of the 50S ribosomal subunit.

Its subcellular location is the plastid. The protein localises to the chloroplast. In terms of biological role, binds 23S rRNA. The protein is Large ribosomal subunit protein uL6c (rpl6) of Guillardia theta (Cryptophyte).